The primary structure comprises 176 residues: Ribosome rescue factor SmrB (176 aa).

The 76-residue stretch at 93 to 168 folds into the Smr domain; the sequence is LDLHGYRQSE…GDAALLVLID (76 aa).

Belongs to the SmrB family. In terms of assembly, associates with collided ribosomes, but not with correctly translating polysomes.

Its function is as follows. Acts as a ribosome collision sensor. Detects stalled/collided disomes (pairs of ribosomes where the leading ribosome is stalled and a second ribosome has collided with it) and endonucleolytically cleaves mRNA at the 5' boundary of the stalled ribosome. Stalled/collided disomes form a new interface (primarily via the 30S subunits) that binds SmrB. Cleaved mRNA becomes available for tmRNA ligation, leading to ribosomal subunit dissociation and rescue of stalled ribosomes. The sequence is that of Ribosome rescue factor SmrB from Shewanella sp. (strain MR-4).